We begin with the raw amino-acid sequence, 853 residues long: WEB family protein At5g16730, chloroplastic (853 aa).

Low complexity-rich tracts occupy residues 1 to 27 (MASK…PATP) and 36 to 49 (KSET…STTT). A chloroplast-targeting transit peptide spans 1–84 (MASKTKTSLS…PTPPEKSQAR (84 aa)). Disordered stretches follow at residues 1-106 (MASK…IKED), 386-465 (KEDL…SKKA), 666-765 (LAKK…SVEV), and 778-820 (KEAF…ALTA). Positions 92–101 (ESPQTTTRLS) are enriched in polar residues. A coiled-coil region spans residues 94-670 (PQTTTRLSQI…LEEAILAKKQ (577 aa)). Basic and acidic residues-rich tracts occupy residues 402-465 (EVSK…SKKA), 698-718 (NGHR…HEPP), and 732-753 (MEEK…KKDE). The segment covering 754–763 (SQDDDKDDSV) has biased composition (acidic residues). A compositionally biased stretch (basic and acidic residues) spans 778–788 (KEAFPDKKSEL). Serine 790 bears the Phosphoserine mark. Over residues 797–807 (SSKIDESDKTS) the composition is skewed to basic and acidic residues.

It belongs to the WEB family.

It is found in the plastid. It localises to the chloroplast. This Arabidopsis thaliana (Mouse-ear cress) protein is WEB family protein At5g16730, chloroplastic.